The following is a 108-amino-acid chain: Immunoglobulin kappa variable 11-125 (108 aa).

Positions 1–23 are framework-1; that stretch reads DVQMIQSPSSLSASLGDIVTMTC. Cysteines 23 and 88 form a disulfide. Residues 24–34 are complementarity-determining-1; that stretch reads QASQGTSINLN. The tract at residues 35–49 is framework-2; sequence WFQQKPGKAPKLLIY. Residues 50–56 form a complementarity-determining-2 region; that stretch reads GASILED. Residues 57–88 form a framework-3 region; sequence GVPSRFSGSRYGTDFTLTISSLEDEDMATYFC. The tract at residues 89 to 97 is complementarity-determining-3; it reads LQHSYLPYT. The tract at residues 98–108 is framework-4; sequence FGGGTKLEIKR.

The chain is Immunoglobulin kappa variable 11-125 from Mus musculus (Mouse).